Consider the following 65-residue polypeptide: Neurotoxin BmK AGAP-SYPU2 (65 aa).

An LCN-type CS-alpha/beta domain is found at 2 to 64 (KDGYIVDDKN…VPIRVPGRCN (63 aa)). 4 disulfides stabilise this stretch: Cys-12–Cys-63, Cys-16–Cys-36, Cys-22–Cys-46, and Cys-26–Cys-48.

In terms of tissue distribution, expressed by the venom gland.

Its subcellular location is the secreted. In terms of biological role, alpha toxins bind voltage-independently at site-3 of sodium channels and inhibit the inactivation of the activated channels, thereby blocking neuronal transmission. In vivo, shows analgesic activity (ED(50) is 1.42 mg/kg) and antitumor activity against Ehrlich ascites tumor and S-180 fibrosarcoma models. In Olivierus martensii (Manchurian scorpion), this protein is Neurotoxin BmK AGAP-SYPU2.